A 209-amino-acid chain; its full sequence is Auxin-binding protein ABP19b (209 aa).

The signal sequence occupies residues 1-18 (MIFPIFFTFFLLLSTSHA). A disulfide bond links cysteine 24 and cysteine 39. The region spanning 53-199 (SGLGIAGNTT…TTLLDAPQIK (147 aa)) is the Cupin type-1 domain. Asparagine 60 carries an N-linked (GlcNAc...) asparagine glycan. Positions 101, 103, 108, and 147 each coordinate Mn(2+).

The protein belongs to the germin family. In terms of assembly, interacts with ABP20.

The protein localises to the secreted. It localises to the extracellular space. Its subcellular location is the apoplast. The protein resides in the cell wall. Functionally, probable receptor for the plant growth-promoting hormone auxin. The sequence is that of Auxin-binding protein ABP19b (ABP19B) from Prunus persica (Peach).